The sequence spans 418 residues: Gamma-glutamyl phosphate reductase (418 aa).

The protein belongs to the gamma-glutamyl phosphate reductase family.

The protein localises to the cytoplasm. It catalyses the reaction L-glutamate 5-semialdehyde + phosphate + NADP(+) = L-glutamyl 5-phosphate + NADPH + H(+). The protein operates within amino-acid biosynthesis; L-proline biosynthesis; L-glutamate 5-semialdehyde from L-glutamate: step 2/2. Functionally, catalyzes the NADPH-dependent reduction of L-glutamate 5-phosphate into L-glutamate 5-semialdehyde and phosphate. The product spontaneously undergoes cyclization to form 1-pyrroline-5-carboxylate. In Marinobacter nauticus (strain ATCC 700491 / DSM 11845 / VT8) (Marinobacter aquaeolei), this protein is Gamma-glutamyl phosphate reductase.